We begin with the raw amino-acid sequence, 310 residues long: Putative RING-H2 finger protein ATL53 (310 aa).

Residues 62–82 (VIAIFGIFATAFLLAAYYTLV) form a helical membrane-spanning segment. An RING-type; atypical zinc finger spans residues 155–197 (CSICLGEFNEDESLRLLPKCNHTFHVVCIDRWLKSHSNCPLCR).

This sequence belongs to the RING-type zinc finger family. ATL subfamily.

The protein localises to the membrane. The enzyme catalyses S-ubiquitinyl-[E2 ubiquitin-conjugating enzyme]-L-cysteine + [acceptor protein]-L-lysine = [E2 ubiquitin-conjugating enzyme]-L-cysteine + N(6)-ubiquitinyl-[acceptor protein]-L-lysine.. It functions in the pathway protein modification; protein ubiquitination. The sequence is that of Putative RING-H2 finger protein ATL53 (ATL53) from Arabidopsis thaliana (Mouse-ear cress).